Consider the following 234-residue polypeptide: Two-component response regulator ARR9 (234 aa).

In terms of domain architecture, Response regulatory spans H10 to M147. D80 is modified (4-aspartylphosphate).

This sequence belongs to the ARR family. Type-A subfamily. Interacts with AHP1 and AHP3. Two-component system major event consists of a His-to-Asp phosphorelay between a sensor histidine kinase (HK) and a response regulator (RR). In plants, the His-to-Asp phosphorelay involves an additional intermediate named Histidine-containing phosphotransfer protein (HPt). This multistep phosphorelay consists of a His-Asp-His-Asp sequential transfer of a phosphate group between first a His and an Asp of the HK protein, followed by the transfer to a conserved His of the HPt protein and finally the transfer to an Asp in the receiver domain of the RR protein. As to expression, predominantly expressed in roots.

It localises to the nucleus. Functionally, functions as a response regulator involved in His-to-Asp phosphorelay signal transduction system. Phosphorylation of the Asp residue in the receiver domain activates the ability of the protein to promote the transcription of target genes. Type-A response regulators seem to act as negative regulators of the cytokinin signaling. The protein is Two-component response regulator ARR9 (ARR9) of Arabidopsis thaliana (Mouse-ear cress).